The chain runs to 116 residues: Protein aq_1857 (116 aa).

The protein belongs to the HesB/IscA family.

The chain is Protein aq_1857 from Aquifex aeolicus (strain VF5).